A 259-amino-acid polypeptide reads, in one-letter code: Isoprenyl transferase (259 aa).

Asp-33 is a catalytic residue. Asp-33 provides a ligand contact to Mg(2+). Substrate-binding positions include 34–37, Trp-38, His-51, and 79–81; these read GNRR and STE. The Proton acceptor role is filled by Asn-82. Substrate-binding positions include Arg-86, Arg-208, and 214-216; that span reads RMS. Glu-227 contributes to the Mg(2+) binding site.

It belongs to the UPP synthase family. As to quaternary structure, homodimer. Mg(2+) serves as cofactor.

Catalyzes the condensation of isopentenyl diphosphate (IPP) with allylic pyrophosphates generating different type of terpenoids. The polypeptide is Isoprenyl transferase (Streptomyces fradiae (Streptomyces roseoflavus)).